Consider the following 190-residue polypeptide: Dynein axonemal light chain 1 (190 aa).

Ala-2 is subject to N-acetylalanine. LRR repeat units follow at residues 47–69 (LANC…LNGL), 70–93 (KNLR…AVGD), 95–114 (LEEL…IHVM), and 115–138 (RKLK…KLAE). Ser-56 is subject to Phosphoserine.

Belongs to the dynein light chain LC1-type family. As to quaternary structure, interacts with ZMYND10 (via C-terminus). Interacts with DNAH5, a outer arm dynein heavy chain. Interacts with tubulin located within the A-tubule of the outer doublets in a ATP-independent manner.

It is found in the cytoplasm. It localises to the cytoskeleton. The protein resides in the cilium axoneme. Functionally, part of the multisubunit axonemal ATPase complexes that generate the force for cilia motility and govern beat frequency. Component of the outer arm dynein (ODA). May be involved in a mechanosensory feedback mechanism controlling ODA activity based on external conformational cues by tethering the outer arm dynein heavy chain (DNAH5) to the microtubule within the axoneme. Important for ciliary function in the airways and for the function of the cilia that produce the nodal flow essential for the determination of the left-right asymmetry. The chain is Dynein axonemal light chain 1 from Rattus norvegicus (Rat).